The sequence spans 562 residues: Putative transport protein ECA2683 (562 aa).

6 consecutive transmembrane segments (helical) span residues 8 to 28, 32 to 52, 66 to 86, 93 to 113, 116 to 136, and 158 to 178; these read LLNG…LCLG, LGPV…LLGQ, FMLF…SIFF, FMLA…LGKL, WGIG…PVLV, and HLSL…IFGA. RCK C-terminal domains follow at residues 202–288 and 290–373; these read LDVD…NFRD and KEVF…RIGF. The next 5 membrane-spanning stretches (helical) occupy residues 383 to 403, 406 to 426, 447 to 467, 478 to 498, and 537 to 557; these read LLAF…TIQF, FTFG…LGFL, FGLM…INSS, SGLI…AYVL, and GTYA…VVIW.

Belongs to the AAE transporter (TC 2.A.81) family. YbjL subfamily.

It is found in the cell membrane. This chain is Putative transport protein ECA2683, found in Pectobacterium atrosepticum (strain SCRI 1043 / ATCC BAA-672) (Erwinia carotovora subsp. atroseptica).